The chain runs to 419 residues: Elongation factor Tu, chloroplastic (419 aa).

The 205-residue stretch at 10-214 folds into the tr-type G domain; the sequence is KPHVNIGTIG…AVDSYIPTPK (205 aa). The G1 stretch occupies residues 19–26; it reads GHVDHGKT. Residue 19 to 26 coordinates GTP; the sequence is GHVDHGKT. Thr26 provides a ligand contact to Mg(2+). Positions 60–64 are G2; it reads GITIN. Residues 81 to 84 form a G3 region; sequence DCPG. GTP is bound by residues 81–85 and 136–139; these read DCPGH and NKED. The segment at 136 to 139 is G4; sequence NKED. A G5 region spans residues 174–176; it reads SAL.

It belongs to the TRAFAC class translation factor GTPase superfamily. Classic translation factor GTPase family. EF-Tu/EF-1A subfamily.

Its subcellular location is the plastid. The protein resides in the chloroplast. The catalysed reaction is GTP + H2O = GDP + phosphate + H(+). Its function is as follows. GTP hydrolase that promotes the GTP-dependent binding of aminoacyl-tRNA to the A-site of ribosomes during protein biosynthesis. This is Elongation factor Tu, chloroplastic (tufA) from Chara vulgaris (Common stonewort).